The primary structure comprises 228 residues: Protein TIFY 10a (228 aa).

A Tify domain is found at Arg-75–Lys-110. The Jas signature appears at Pro-164–Gln-189. Positions Ala-166–Arg-173 match the Nuclear localization signal motif. A disordered region spans residues Leu-175 to Gln-228.

Belongs to the TIFY/JAZ family. Interacts with COI1A and COI1B in a coronatine-dependent manner. Coronatine is an analog of jasmonoyl isoleucine (JA-Ile). Ubiquitinated. Targeted for degradation by the SCF(COI1) E3 ubiquitin ligase-proteasome pathway during jasmonate signaling.

It is found in the nucleus. In terms of biological role, repressor of jasmonate responses. This chain is Protein TIFY 10a, found in Oryza sativa subsp. japonica (Rice).